A 269-amino-acid chain; its full sequence is Nuclear egress protein 2 (269 aa).

The Perinuclear space portion of the chain corresponds to 1–247; it reads MSRRTYVRSE…VWKLALPVAN (247 aa). Residues 248 to 268 form a helical membrane-spanning segment; it reads VTYALFIVIVLVVVLGAVLFW. Position 269 (lysine 269) is a topological domain, nuclear.

Belongs to the herpesviridae NEC2 protein family. In terms of assembly, forms a heterohexameric complex with NEC1. In terms of processing, phosphorylated.

The protein localises to the host nucleus inner membrane. Functionally, plays an essential role in virion nuclear egress, the first step of virion release from infected cell. Within the host nucleus, NEC1 interacts with the newly formed capsid through the vertexes and directs it to the inner nuclear membrane by associating with NEC2. Induces the budding of the capsid at the inner nuclear membrane as well as its envelopment into the perinuclear space. There, the NEC1/NEC2 complex promotes the fusion of the enveloped capsid with the outer nuclear membrane and the subsequent release of the viral capsid into the cytoplasm where it will reach the secondary budding sites in the host Golgi or trans-Golgi network. In Homo sapiens (Human), this protein is Nuclear egress protein 2.